Here is a 102-residue protein sequence, read N- to C-terminus: Large ribosomal subunit protein bL21 (102 aa).

This sequence belongs to the bacterial ribosomal protein bL21 family. In terms of assembly, part of the 50S ribosomal subunit. Contacts protein L20.

This protein binds to 23S rRNA in the presence of protein L20. The chain is Large ribosomal subunit protein bL21 from Finegoldia magna (strain ATCC 29328 / DSM 20472 / WAL 2508) (Peptostreptococcus magnus).